Here is a 305-residue protein sequence, read N- to C-terminus: Fructose-bisphosphate aldolase (305 aa).

Serine 49 provides a ligand contact to D-glyceraldehyde 3-phosphate. Aspartate 80 serves as the catalytic Proton donor. Histidine 81, aspartate 102, glutamate 132, and histidine 178 together coordinate Zn(2+). Dihydroxyacetone phosphate is bound at residue glycine 179. Histidine 208 contributes to the Zn(2+) binding site. Residues 209–211 (GAS) and 251–254 (NTDT) each bind dihydroxyacetone phosphate.

It belongs to the class II fructose-bisphosphate aldolase family. In terms of assembly, homotetramer. Requires Zn(2+) as cofactor.

It catalyses the reaction beta-D-fructose 1,6-bisphosphate = D-glyceraldehyde 3-phosphate + dihydroxyacetone phosphate. It functions in the pathway carbohydrate degradation; glycolysis; D-glyceraldehyde 3-phosphate and glycerone phosphate from D-glucose: step 4/4. Catalyzes the aldol condensation of dihydroxyacetone phosphate (DHAP or glycerone-phosphate) with glyceraldehyde 3-phosphate (G3P) to form fructose 1,6-bisphosphate (FBP) in gluconeogenesis and the reverse reaction in glycolysis. This is Fructose-bisphosphate aldolase from Thermus caldophilus.